Here is a 215-residue protein sequence, read N- to C-terminus: Rac-like GTP-binding protein ARAC10 (215 aa).

GTP is bound at residue 15–22 (GDGAVGKT). The Effector region motif lies at 37-45 (YIPTVFDNF). GTP-binding positions include 62–66 (DTAGQ) and 120–123 (TKLD). Residues Cys202 and Cys208 are each lipidated (S-palmitoyl cysteine).

The protein belongs to the small GTPase superfamily. Rho family. Component of the active ARAC10-IRC5-KIN13A complex. Interacts with ICR5.

The protein localises to the membrane. The protein resides in the cytoplasm. It localises to the cytoskeleton. Involved in local disassembly of cortical microtubules when associated with ICR5 and KIN13A. This Arabidopsis thaliana (Mouse-ear cress) protein is Rac-like GTP-binding protein ARAC10 (ARAC10).